The following is a 197-amino-acid chain: Adrenodoxin-like protein 1, mitochondrial (197 aa).

The transit peptide at 1–35 (MIGHRISRLGSTIVKQLAREGYLATYGTKNLHRSY) directs the protein to the mitochondrion. The 2Fe-2S ferredoxin-type domain maps to 79–184 (EKITIIFVDK…GVRLAIPSAT (106 aa)). Residues C118, C124, C127, and C165 each contribute to the [2Fe-2S] cluster site.

Belongs to the adrenodoxin/putidaredoxin family. [2Fe-2S] cluster is required as a cofactor.

It is found in the mitochondrion matrix. Its function is as follows. Associates in vitro with the adrenodoxin reductase MFDR to form an efficient low potential electron transfer chain that is able to reduce cytochrome C. Functions as accessory mitochondrial protein involved with BIO2 in the plant biotin synthase reaction. The polypeptide is Adrenodoxin-like protein 1, mitochondrial (Arabidopsis thaliana (Mouse-ear cress)).